A 1216-amino-acid chain; its full sequence is 1-phosphatidylinositol 4,5-bisphosphate phosphodiesterase beta-1 (1216 aa).

Cysteine 17 carries S-palmitoyl cysteine lipidation. Serine 236 bears the Phosphoserine mark. In terms of domain architecture, PI-PLC X-box spans glutamate 316–lysine 467. Active-site residues include histidine 331 and histidine 378. Serine 417 is subject to Phosphoserine. The disordered stretch occupies residues lysine 469–alanine 534. Positions lysine 472–serine 483 are enriched in basic and acidic residues. Residues serine 491–serine 501 are compositionally biased toward low complexity. A compositionally biased stretch (acidic residues) spans alanine 507–aspartate 518. Threonine 509 is modified (phosphothreonine). Phosphoserine occurs at positions 511 and 582. The region spanning methionine 540–arginine 656 is the PI-PLC Y-box domain. Residues arginine 656–leucine 786 form the C2 domain. Disordered stretches follow at residues aspartate 834–proline 891, glutamate 967–alanine 989, methionine 1072–lysine 1095, and isoleucine 1173–leucine 1216. A compositionally biased stretch (polar residues) spans glutamate 846–alanine 868. Phosphoserine; by PKC is present on serine 887. Over residues glutamate 967–glutamate 979 the composition is skewed to basic and acidic residues. Phosphoserine occurs at positions 978 and 987. Basic and acidic residues predominate over residues lysine 1075–lysine 1095. Residues serine 1197, serine 1199, and serine 1200 each carry the phosphoserine modification. Over residues arginine 1205–leucine 1216 the composition is skewed to basic and acidic residues.

As to quaternary structure, interacts with DGKQ. It depends on Ca(2+) as a cofactor. In terms of processing, palmitoylated. Palmitoylation at Cys-17 by ZDHHC21 regulates the signaling activity of PLCB1 and the function of the endothelial barrier. Palmitoylation by ZDHHC21 is stimulated by inflammation.

The protein resides in the nucleus membrane. Its subcellular location is the cytoplasm. It catalyses the reaction a 1,2-diacyl-sn-glycero-3-phospho-(1D-myo-inositol-4,5-bisphosphate) + H2O = 1D-myo-inositol 1,4,5-trisphosphate + a 1,2-diacyl-sn-glycerol + H(+). The enzyme catalyses a 1,2-diacyl-sn-glycero-3-phospho-(1D-myo-inositol) + H2O = 1D-myo-inositol 1-phosphate + a 1,2-diacyl-sn-glycerol + H(+). In terms of biological role, catalyzes the hydrolysis of 1-phosphatidylinositol 4,5-bisphosphate into diacylglycerol (DAG) and inositol 1,4,5-trisphosphate (IP3) and mediates intracellular signaling downstream of G protein-coupled receptors. Regulates the function of the endothelial barrier. This Mus musculus (Mouse) protein is 1-phosphatidylinositol 4,5-bisphosphate phosphodiesterase beta-1.